We begin with the raw amino-acid sequence, 1342 residues long: DNA-directed RNA polymerase subunit beta (1342 aa).

The protein belongs to the RNA polymerase beta chain family. In terms of assembly, the RNAP catalytic core consists of 2 alpha, 1 beta, 1 beta' and 1 omega subunit. When a sigma factor is associated with the core the holoenzyme is formed, which can initiate transcription.

It catalyses the reaction RNA(n) + a ribonucleoside 5'-triphosphate = RNA(n+1) + diphosphate. Its function is as follows. DNA-dependent RNA polymerase catalyzes the transcription of DNA into RNA using the four ribonucleoside triphosphates as substrates. The chain is DNA-directed RNA polymerase subunit beta from Shewanella amazonensis (strain ATCC BAA-1098 / SB2B).